The primary structure comprises 173 residues: NAD(P)H-quinone oxidoreductase subunit J (173 aa).

It belongs to the complex I 30 kDa subunit family. In terms of assembly, NDH-1 can be composed of about 15 different subunits; different subcomplexes with different compositions have been identified which probably have different functions.

Its subcellular location is the cellular thylakoid membrane. The enzyme catalyses a plastoquinone + NADH + (n+1) H(+)(in) = a plastoquinol + NAD(+) + n H(+)(out). It carries out the reaction a plastoquinone + NADPH + (n+1) H(+)(in) = a plastoquinol + NADP(+) + n H(+)(out). Functionally, NDH-1 shuttles electrons from an unknown electron donor, via FMN and iron-sulfur (Fe-S) centers, to quinones in the respiratory and/or the photosynthetic chain. The immediate electron acceptor for the enzyme in this species is believed to be plastoquinone. Couples the redox reaction to proton translocation, and thus conserves the redox energy in a proton gradient. Cyanobacterial NDH-1 also plays a role in inorganic carbon-concentration. The protein is NAD(P)H-quinone oxidoreductase subunit J of Prochlorococcus marinus (strain NATL1A).